Consider the following 220-residue polypeptide: MNSAKLIDHTLLKPESTRTQIDQIIDEAKAYNFKSVCVNPTHVKYAAERLADSGVLVCTVIGFPLGASTTATKAFETEDAIQNGADEIDMVINIGALKDGRFDDVQQDIEAVVKAAKGHTVKVIIETVLLDHDEIVKASELTKAAGADFVKTSTGFAGGGATAEDVKLMKDTVGADVEVKASGGVRNLEDFNKMVEAGATRIGASAGVQIMQGLEADSDY.

Asp-89 (proton donor/acceptor) is an active-site residue. Residue Lys-151 is the Schiff-base intermediate with acetaldehyde of the active site. The active-site Proton donor/acceptor is Lys-180.

This sequence belongs to the DeoC/FbaB aldolase family. DeoC type 1 subfamily.

It localises to the cytoplasm. The catalysed reaction is 2-deoxy-D-ribose 5-phosphate = D-glyceraldehyde 3-phosphate + acetaldehyde. It functions in the pathway carbohydrate degradation; 2-deoxy-D-ribose 1-phosphate degradation; D-glyceraldehyde 3-phosphate and acetaldehyde from 2-deoxy-alpha-D-ribose 1-phosphate: step 2/2. In terms of biological role, catalyzes a reversible aldol reaction between acetaldehyde and D-glyceraldehyde 3-phosphate to generate 2-deoxy-D-ribose 5-phosphate. The polypeptide is Deoxyribose-phosphate aldolase 2 (Staphylococcus aureus (strain MRSA252)).